Here is a 728-residue protein sequence, read N- to C-terminus: Histone demethylase JHD2 (728 aa).

One can recognise a JmjN domain in the interval 4 to 47 (IPALYPTEQEFKNPIDYLSNPHIKRLGVRYGMVKVVPPNGFCPP). Residues 235 to 285 (DDACIVCRKTNDPKRTILCDSCDKPFHIYCLSPPLERVPSGDWICNTCIVG) form a PHD-type zinc finger. The 169-residue stretch at 381–549 (KYCDHPMNLT…YGFGAITDYK (169 aa)) folds into the JmjC domain. Fe cation-binding residues include His427, Asp430, and His517.

Belongs to the JARID1 histone demethylase family. It depends on Fe(2+) as a cofactor.

The protein resides in the nucleus. The enzyme catalyses N(6),N(6),N(6)-trimethyl-L-lysyl(4)-[histone H3] + 3 2-oxoglutarate + 3 O2 = L-lysyl(4)-[histone H3] + 3 formaldehyde + 3 succinate + 3 CO2. Histone demethylase that demethylates 'Lys-4' of histone H3, thereby playing a central role in histone code. Demethylates trimethylated H3 'Lys-4'. The polypeptide is Histone demethylase JHD2 (JHD2) (Saccharomyces cerevisiae (strain ATCC 204508 / S288c) (Baker's yeast)).